Reading from the N-terminus, the 113-residue chain is Beta-microseminoprotein (113 aa).

The N-terminal stretch at 1–20 (MEAWLGSLLFLATMVIASKA) is a signal peptide. 5 disulfides stabilise this stretch: Cys-22-Cys-69, Cys-38-Cys-61, Cys-56-Cys-92, Cys-59-Cys-68, and Cys-83-Cys-106.

The protein belongs to the beta-microseminoprotein family. Homodimer; Interacts with PI16.

The protein resides in the secreted. This Mus musculus (Mouse) protein is Beta-microseminoprotein (Msmb).